Reading from the N-terminus, the 492-residue chain is Propanoyl-CoA:succinate CoA transferase (492 aa).

260–264 (GVGNI) contributes to the CoA binding site. Catalysis depends on E286, which acts as the 5-glutamyl coenzyme A thioester intermediate. The CoA site is built by N376 and G380.

It belongs to the acetyl-CoA hydrolase/transferase family.

It catalyses the reaction propanoyl-CoA + succinate = propanoate + succinyl-CoA. Catalyzes the transfer of coenzyme A from propionyl-CoA to succinate. Could be part of a pathway that converts succinate to propionate. This is Propanoyl-CoA:succinate CoA transferase from Escherichia coli (strain K12).